Reading from the N-terminus, the 418-residue chain is PP2A regulatory subunit TAP46 (418 aa).

Positions 367–418 (KMIQESNSAWHKDGSRSAQEDEDAEEEKARAWDDWKDDNPRGAGNKKLTPCG) are disordered. Basic and acidic residues-rich tracts occupy residues 376-385 (WHKDGSRSAQ) and 393-406 (EKAR…DDNP).

This sequence belongs to the IGBP1/TAP42 family.

Functionally, involved in the regulation of the TOR signaling pathway. Seems to act as a regulator of PP2A catalytic activity. This is PP2A regulatory subunit TAP46 from Oryza sativa subsp. japonica (Rice).